Consider the following 131-residue polypeptide: MKFLSTLILLLSVLALVRGEQYNKFTVDLNGVCTNSGSLDTCTNQCGNAGGSFQISQSGGEYQYEQYATKDCDLMASLTSKFACLADEAPVTLGLGNIKITCQDPSNSASSPLTTAVLFVVAFAAAIALLL.

The first 19 residues, 1–19, serve as a signal peptide directing secretion; the sequence is MKFLSTLILLLSVLALVRG. Residue S106 is the site of GPI-like-anchor amidated serine attachment. Positions 107–131 are cleaved as a propeptide — removed in mature form; the sequence is NSASSPLTTAVLFVVAFAAAIALLL.

Belongs to the ponticulin family. In terms of processing, the GPI-like-anchor contains a phosphoceramide group, rather than a phosphatidyl group.

It is found in the cell membrane. Functionally, binds F-actin and nucleates actin assembly. The chain is Ponticulin-like protein M (ponM) from Dictyostelium discoideum (Social amoeba).